The sequence spans 188 residues: MANYSTNEFKGGLKIMMDGEPSSIIENEMVKPGKGQAFNRVRIRKLISGKVLEKTFKSGESVEGADVMDTDLAYLYTDGEFWHFMNNETFEQIAADEKALGDAGKWLVENDVCTITLWNGNPIVVTPPNFVELEITETDPGLKGDTAGTGGKPATLSTGAVVRVPLFVQIGEVIKVDTRNGEYVSRVK.

At Lys-34 the chain carries N6-(3,6-diaminohexanoyl)-5-hydroxylysine.

Belongs to the elongation factor P family. Post-translationally, may be beta-lysylated on the epsilon-amino group of Lys-34 by the combined action of EpmA and EpmB, and then hydroxylated on the C5 position of the same residue by EpmC (if this protein is present). Lysylation is critical for the stimulatory effect of EF-P on peptide-bond formation. The lysylation moiety may extend toward the peptidyltransferase center and stabilize the terminal 3-CCA end of the tRNA. Hydroxylation of the C5 position on Lys-34 may allow additional potential stabilizing hydrogen-bond interactions with the P-tRNA.

It localises to the cytoplasm. It participates in protein biosynthesis; polypeptide chain elongation. Its function is as follows. Involved in peptide bond synthesis. Alleviates ribosome stalling that occurs when 3 or more consecutive Pro residues or the sequence PPG is present in a protein, possibly by augmenting the peptidyl transferase activity of the ribosome. Modification of Lys-34 is required for alleviation. The polypeptide is Elongation factor P (Pseudoalteromonas translucida (strain TAC 125)).